We begin with the raw amino-acid sequence, 1744 residues long: Probable disease resistance protein At4g19520 (1744 aa).

Positions 3 to 163 (DGKEVYISFN…KIVADVRQKL (161 aa)) constitute a TIR 1 domain. E80 is an active-site residue. Residues 192–411 (SLGIWGMAGI…VSEKEIFLDI (220 aa)) enclose the NB-ARC domain. LRR repeat units lie at residues 503–526 (YEDV…AFQH), 557–581 (PPEL…GFQY), 583–602 (VELN…TKNL), 603–626 (EVLK…QYSP), 648–669 (LQHL…PKVP), 670–692 (PSIR…NHSS), 710–733 (DHRK…IVIF), 734–754 (ESLE…QGFP), 755–777 (QNLK…LCHH), 779–802 (SKLV…MSNM), 804–823 (YLAV…KELP), 824–846 (RNLK…LLET), 848–871 (SEVV…MSKL), 892–915 (PLNL…IGDL), 917–939 (LLDT…MHNL), 941–963 (PLKV…LPKV), 987–1010 (YEHR…IRWM), 1011–1035 (PSLK…DFSK), 1037–1059 (LSLR…SLQL), and 1062–1086 (AHGC…TFSN). The TIR 2 domain occupies 1399–1559 (RNNDVFVSFH…KVANDIRKKL (161 aa)).

It belongs to the disease resistance TIR-NB-LRR family.

The catalysed reaction is NAD(+) + H2O = ADP-D-ribose + nicotinamide + H(+). Functionally, probable disease resistance protein. The sequence is that of Probable disease resistance protein At4g19520 from Arabidopsis thaliana (Mouse-ear cress).